Consider the following 185-residue polypeptide: Probable host range protein 2 (185 aa).

It belongs to the poxviridae C7 protein family.

In terms of biological role, plays a role for multiplication of the virus in different cell types. The sequence is that of Probable host range protein 2 from Swinepox virus (strain Kasza) (SWPV).